The chain runs to 231 residues: Ribosomal RNA small subunit methyltransferase G (231 aa).

S-adenosyl-L-methionine is bound by residues glycine 75, 125 to 126 (GE), and arginine 140. Positions 204–213 (AEAEEGDSPE) are enriched in acidic residues. Residues 204–231 (AEAEEGDSPEAADASRGVILELTKKNKG) are disordered.

Belongs to the methyltransferase superfamily. RNA methyltransferase RsmG family.

The protein resides in the cytoplasm. Specifically methylates the N7 position of a guanine in 16S rRNA. The sequence is that of Ribosomal RNA small subunit methyltransferase G from Rhodopirellula baltica (strain DSM 10527 / NCIMB 13988 / SH1).